Consider the following 152-residue polypeptide: Male-specific protein scotti (152 aa).

It belongs to the male-specific scotti family.

Its function is as follows. Post-meiotically transcribed gene that has a role in late spermiogenesis; required for actin cone progression during spermatid individualization. The sequence is that of Male-specific protein scotti from Drosophila mojavensis (Fruit fly).